The following is a 176-amino-acid chain: DELTA-stichotoxin-She4a (176 aa).

Positions 2 to 11 (ELAGTIIDGA) are plays an important role in the hemolytic activity. The interval 10–29 (GASLTFEVLDKVLGELGKVS) is N-terminal region. 7 residues coordinate phosphocholine: serine 53, valine 86, serine 104, proline 106, tyrosine 132, tyrosine 136, and tyrosine 137. Residues 104 to 119 (SVPFDYNWYSNWWDVK) form a trp-rich region, which is important for the binding to lipid membrane region. Residues 142 to 144 (RGD) carry the Cell attachment site motif.

In terms of assembly, octamer or nonamer in membranes. Monomer in the soluble state.

The protein localises to the secreted. Its subcellular location is the nematocyst. It localises to the target cell membrane. In terms of biological role, pore-forming protein that forms cations-selective hydrophilic pores of around 1 nm and causes cardiac stimulation and cytolysis. Pore formation is a multi-step process that involves specific recognition of membrane sphingomyelin (but neither cholesterol nor phosphatidylcholine) using aromatic rich region and adjacent phosphocholine (POC) binding site, firm binding to the membrane (mainly driven by hydrophobic interactions) accompanied by the transfer of the N-terminal region to the lipid-water interface and finally pore formation after oligomerization of monomers. Cytolytic effects include red blood cells hemolysis, platelet aggregation and lysis, cytotoxic and cytostatic effects on fibroblasts. Lethality in mammals has been ascribed to severe vasospasm of coronary vessels, cardiac arrhythmia, and inotropic effects. The polypeptide is DELTA-stichotoxin-She4a (Stichodactyla helianthus (Sun anemone)).